A 631-amino-acid chain; its full sequence is Plastidic ATP/ADP-transporter (631 aa).

The next 11 membrane-spanning stretches (helical) occupy residues 106–126, 149–169, 180–200, 238–258, 271–290, 313–333, 369–389, 407–427, 442–462, 465–485, and 543–563; these read IELVTLKKIIPLGAMFFCILF, IIPFLKTWVNLPMAIGFMLLY, ALFYTVILPFIAFFGAFGFVL, LFYVMAELWGSVVVSVLFWGF, FYPLFGLGANVALIFSGRTV, GMMSIVVMMGGAICFFYWWVN, LATLVVAYGISINLVEVTWKS, DFSTATGIATFTMMLLSQWIF, VLLLTGVGFFSLLLFGAPLAP, AKFGMTPLLAAVYVGAMQNIF, and LASSTPYLGGVLLVIVLAWLG. The disordered stretch occupies residues 586–631; the sequence is ERASLKIPVVSQNENGNGPLSSESSLNPAGGDSTNASSEPSSPRSL. Polar residues predominate over residues 595-631; sequence VSQNENGNGPLSSESSLNPAGGDSTNASSEPSSPRSL.

It belongs to the ADP/ATP translocase tlc (TC 2.A.12.2) family.

The protein resides in the plastid. Its subcellular location is the chloroplast membrane. The protein is Plastidic ATP/ADP-transporter of Solanum tuberosum (Potato).